Reading from the N-terminus, the 242-residue chain is Probable transcriptional regulatory protein BamMC406_2210 (242 aa).

Belongs to the TACO1 family.

It localises to the cytoplasm. The protein is Probable transcriptional regulatory protein BamMC406_2210 of Burkholderia ambifaria (strain MC40-6).